Reading from the N-terminus, the 500-residue chain is Ent-kaurene oxidase P450-4 (500 aa).

A helical membrane pass occupies residues 6-26 (VHWLIYVAFGAWLCSYVIHVL). A glycan (N-linked (GlcNAc...) asparagine) is linked at N240. C441 contacts heme. N-linked (GlcNAc...) asparagine glycosylation occurs at N475.

It belongs to the cytochrome P450 family. Heme serves as cofactor.

It localises to the membrane. It catalyses the reaction ent-kaur-16-ene + 3 reduced [NADPH--hemoprotein reductase] + 3 O2 = ent-kaur-16-en-19-oate + 3 oxidized [NADPH--hemoprotein reductase] + 4 H2O + 4 H(+). It functions in the pathway plant hormone biosynthesis; gibberellin biosynthesis. Ent-kaurene oxidase; part of the gene cluster that mediates the biosynthesis of gibberellins (GAs), diterpenoids that may provide a selective advantage during infection of the preferred host plant, rice. Gibberellins (GAs) are diterpenoids and are synthesized via the mevalonate pathway. Biosynthesis of the major metabolite GA3 (gibberellic acid) from geranylgeranyl diphosphate (GGPP) requires 13 steps. The GGPP produced by the geranylgeranyl diphosphate synthase GGS2 is converted to ent-kaurene via ent-copalyldiphosphate in a two-step cyclization reaction performed by the bifunctional ent-copalyl diphosphate synthase/ent-kaurene synthase enzyme (CPS/KS). Ent-Kaurene is metabolized to GAs by a series of oxidation reactions catalyzed by cytochrome P450 monooxygenases. Cytochrome P450 monooxygenase P450-4 is an ent-kaurene oxidase that catalyzes the three oxidation steps between ent-kaurene and ent-kaurenoic acid. The highly multifunctional cytochrome P450 monooxygenase P450-1 then catalyzes four steps involving oxidation at two carbon atoms, in the main pathway from ent-kaurenoic acid to GA14 via GA12-aldehyde as well as producing kaurenolides and fujenoic acids as by-products. The cytochrome P450 monooxygenase P450-2 then converts GA14 to GA4 by removal of C-20. GA4 is further converted to GA7 by the GA4 desaturase DES via 1,2-desaturation before cytochrome P450 monooxygenase P450-3, a 13-hydroxylase, hydroxylates GA7 to GA3, the final product of the GA-biosynthetic pathway. This is Ent-kaurene oxidase P450-4 from Gibberella fujikuroi (strain CBS 195.34 / IMI 58289 / NRRL A-6831) (Bakanae and foot rot disease fungus).